Reading from the N-terminus, the 281-residue chain is Shikimate dehydrogenase (NADP(+)) (281 aa).

Residues 15 to 17 (SKS) and T62 each bind shikimate. K66 functions as the Proton acceptor in the catalytic mechanism. Residues N87 and D102 each coordinate shikimate. Residues 127-131 (GAGGS), 151-156 (NRTPER), and L217 each bind NADP(+). Y219 serves as a coordination point for shikimate. G241 is a binding site for NADP(+).

This sequence belongs to the shikimate dehydrogenase family. In terms of assembly, homodimer.

The catalysed reaction is shikimate + NADP(+) = 3-dehydroshikimate + NADPH + H(+). The protein operates within metabolic intermediate biosynthesis; chorismate biosynthesis; chorismate from D-erythrose 4-phosphate and phosphoenolpyruvate: step 4/7. Involved in the biosynthesis of the chorismate, which leads to the biosynthesis of aromatic amino acids. Catalyzes the reversible NADPH linked reduction of 3-dehydroshikimate (DHSA) to yield shikimate (SA). This Stenotrophomonas maltophilia (strain K279a) protein is Shikimate dehydrogenase (NADP(+)).